Consider the following 474-residue polypeptide: CUGBP Elav-like family member 4 (474 aa).

Residues 1–287 (MYIKMATLAN…AAFAAAQMQQ (287 aa)) form a sufficient for RNA-binding and MSE-dependent splicing activity region. Over residues 18-28 (LSTNGLGSSPG) the composition is skewed to polar residues. The tract at residues 18–41 (LSTNGLGSSPGSAGHMNGLSHSPG) is disordered. RRM domains lie at 54–135 (IKLF…PADS) and 141–221 (RKLF…FADT). The tract at residues 228–247 (RRMQQMAGQMGMFNPMAIPF) is necessary for TNNT2 exon 5 inclusion. In terms of domain architecture, RRM 3 spans 392–467 (PQPPPMIPQQ…KRLKVQLKRP (76 aa)).

Belongs to the CELF/BRUNOL family.

The protein resides in the nucleus. It is found in the cytoplasm. In terms of biological role, RNA-binding protein implicated in the regulation of pre-mRNA alternative splicing. Mediates exon inclusion and/or exclusion in pre-mRNA that are subject to tissue-specific and developmentally regulated alternative splicing. Specifically activates exon 5 inclusion of cardiac isoforms of TNNT2 during heart remodeling at the juvenile to adult transition. Promotes exclusion of both the smooth muscle (SM) and non-muscle (NM) exons in actinin pre-mRNAs. Activates the splicing of MAPT/Tau exon 10. Binds to muscle-specific splicing enhancer (MSE) intronic sites flanking the alternative exon 5 of TNNT2 pre-mRNA. This is CUGBP Elav-like family member 4 (CELF4) from Macaca fascicularis (Crab-eating macaque).